Reading from the N-terminus, the 208-residue chain is Large ribosomal subunit protein uL4 (208 aa).

The disordered stretch occupies residues 44 to 76 (RRQGTQSTKTKSEVRGGGRKPWRQKGTGRARHG). Residues 60-76 (GGRKPWRQKGTGRARHG) are compositionally biased toward basic residues.

This sequence belongs to the universal ribosomal protein uL4 family. As to quaternary structure, part of the 50S ribosomal subunit.

One of the primary rRNA binding proteins, this protein initially binds near the 5'-end of the 23S rRNA. It is important during the early stages of 50S assembly. It makes multiple contacts with different domains of the 23S rRNA in the assembled 50S subunit and ribosome. Its function is as follows. Forms part of the polypeptide exit tunnel. The chain is Large ribosomal subunit protein uL4 from Acetivibrio thermocellus (strain ATCC 27405 / DSM 1237 / JCM 9322 / NBRC 103400 / NCIMB 10682 / NRRL B-4536 / VPI 7372) (Clostridium thermocellum).